A 156-amino-acid chain; its full sequence is Small ribosomal subunit protein uS7 (156 aa).

It belongs to the universal ribosomal protein uS7 family. Part of the 30S ribosomal subunit. Contacts proteins S9 and S11.

In terms of biological role, one of the primary rRNA binding proteins, it binds directly to 16S rRNA where it nucleates assembly of the head domain of the 30S subunit. Is located at the subunit interface close to the decoding center, probably blocks exit of the E-site tRNA. The chain is Small ribosomal subunit protein uS7 from Shouchella clausii (strain KSM-K16) (Alkalihalobacillus clausii).